A 185-amino-acid polypeptide reads, in one-letter code: MPQVNLKLSSHDRQVLESIFNPLELSSTQPSVSVPCESELADVEPDTEAVRSSRELELQGVLLTEKGSFDEALKVFQLALNQAQRASVLNNRAQTLRLAKRDGEALDDLNKALEMASDQQSRTKCHAHCQRGVLYRKLDNLDAARSDFEAAAQLGSKFAREQLVEINPFAALCNQMLRKAFDQLQ.

TPR repeat units follow at residues 53–86, 88–119, and 125–158; these read SREL…AQRA, VLNN…ASDQ, and CHAH…GSKF.

It belongs to the TTC36 family.

In Drosophila pseudoobscura pseudoobscura (Fruit fly), this protein is Tetratricopeptide repeat protein 36 homolog.